The primary structure comprises 390 residues: Transposase for insertion sequence element IS256 in transposon Tn4001 (390 aa).

This sequence belongs to the transposase mutator family.

Functionally, required for the transposition of the insertion element. In Enterococcus faecalis (strain ATCC 700802 / V583), this protein is Transposase for insertion sequence element IS256 in transposon Tn4001.